The primary structure comprises 146 residues: MRKKIIIYTDGACSGNPGKGGWGALLMFGELNREISGYSPATTNNRMELMAAIQALEALKEPCDVDLYSDSSYLVNAIKLGWLKKWSSGGWTTASRKPVENQDLWKKILQLIKLHNVTFHKVKGHSDNEYNNRCDYLARQAIKNNR.

Residues M1–K143 enclose the RNase H type-1 domain. D10, E48, D70, and D135 together coordinate Mg(2+).

The protein belongs to the RNase H family. In terms of assembly, monomer. The cofactor is Mg(2+).

It localises to the cytoplasm. It carries out the reaction Endonucleolytic cleavage to 5'-phosphomonoester.. Endonuclease that specifically degrades the RNA of RNA-DNA hybrids. The polypeptide is Ribonuclease H (Prosthecochloris aestuarii (strain DSM 271 / SK 413)).